Consider the following 375-residue polypeptide: MDLRESDGAVWAVGLMSGTSMDGIDAALLRTDGHQVFEVGPALTVAYDEATRARIRALLGTPPGRSVAEVADLARDLTERHAEVAARLIGQSGVTPAVVGFHGQTLLHRPEARLSVQIGDGALLARRLGVAVVNDLRQADVRAGGQGAPLVPAYHLALAKGLARPLAVLNLGGVGNVTWIGEGDQPPVAFDTGPGNALIDDWMRRRRGVAMDADGALARSGRIDGAALEALLGHDYFRKPAPKSLDRDAFSLEPVNGLSDGDGAATLVAFTAASVARARDWMPAPPKRWLVCGGGRRNGAIMEALTRGLGVAVDPVEAVGWDGDALEAQAFAFLAVRGARGLPLTWPTTTGAPRPLTGGTYWPAATVLGASAVAR.

An ATP-binding site is contributed by 18–25 (GTSMDGID).

The protein belongs to the anhydro-N-acetylmuramic acid kinase family.

It catalyses the reaction 1,6-anhydro-N-acetyl-beta-muramate + ATP + H2O = N-acetyl-D-muramate 6-phosphate + ADP + H(+). It functions in the pathway amino-sugar metabolism; 1,6-anhydro-N-acetylmuramate degradation. It participates in cell wall biogenesis; peptidoglycan recycling. In terms of biological role, catalyzes the specific phosphorylation of 1,6-anhydro-N-acetylmuramic acid (anhMurNAc) with the simultaneous cleavage of the 1,6-anhydro ring, generating MurNAc-6-P. Is required for the utilization of anhMurNAc either imported from the medium or derived from its own cell wall murein, and thus plays a role in cell wall recycling. This Rhodospirillum rubrum (strain ATCC 11170 / ATH 1.1.1 / DSM 467 / LMG 4362 / NCIMB 8255 / S1) protein is Anhydro-N-acetylmuramic acid kinase.